The sequence spans 458 residues: Ammonium transporter Rh type B (458 aa).

Residues 1–13 (MAGSPSRAAGRRL) are Cytoplasmic-facing. Residues 14 to 34 (QLPLLCLFLQGATAVLFAVFV) traverse the membrane as a helical segment. Topologically, residues 35–61 (RYNHKTDAALWHRSNHSNADNEFYFRY) are extracellular. N-linked (GlcNAc...) asparagine glycosylation occurs at Asn-49. A helical membrane pass occupies residues 62–82 (PSFQDVHAMVFVGFGFLMVFL). Over 83-86 (QRYG) the chain is Cytoplasmic. A helical transmembrane segment spans residues 87-107 (FSSVGFTFLLAAFALQWSTLV). The Extracellular portion of the chain corresponds to 108–124 (QGFLHSFHGGHIHVGVE). The chain crosses the membrane as a helical span at residues 125 to 145 (SMINADFCAGAVLISFGAVLG). Topologically, residues 146-149 (KTGP) are cytoplasmic. A helical membrane pass occupies residues 150–170 (TQLLLMALLEVVLFGINEFVL). The Extracellular portion of the chain corresponds to 171–178 (LHLLGVRD). A helical membrane pass occupies residues 179-201 (AGGSMTIHTFGAYFGLVLSRVLY). The Cytoplasmic portion of the chain corresponds to 202-219 (RPQLEKSKHRQGSVYHSD). The chain crosses the membrane as a helical span at residues 220-240 (LFAMIGTIFLWIFWPSFNAAL). Residues 241 to 251 (TALGAGQHRTA) are Extracellular-facing. Residues 252-272 (LNTYYSLAASTLGTFALSALV) form a helical membrane-spanning segment. The Cytoplasmic portion of the chain corresponds to 273–282 (GEDGRLDMVH). The chain crosses the membrane as a helical span at residues 283–303 (IQNAALAGGVVVGTSSEMMLT). A topological domain (extracellular) is located at residue Pro-304. The helical transmembrane segment at 305–325 (FGALAAGFLAGTVSTLGYKFF) threads the bilayer. Residues 326-346 (TPILESKFKVQDTCGVHNLHG) are Cytoplasmic-facing. A helical transmembrane segment spans residues 347-367 (MPGVLGALLGVLVAGLATHEA). Topologically, residues 368–393 (YGDGLESVFPLIAEGQRSATSQAMHQ) are extracellular. A helical transmembrane segment spans residues 394 to 414 (LFGLFVTLMFASVGGGLGGLL). Residues 415-458 (LKLPFLDSPPDSQHYEDQVHWQVPGEHEDKAQRPLRVEEADTQA) lie on the Cytoplasmic side of the membrane. Residues 416–424 (KLPFLDSPP) are interaction with ANK3. Positions 436 to 458 (QVPGEHEDKAQRPLRVEEADTQA) are disordered.

This sequence belongs to the ammonium transporter (TC 2.A.49) family. Rh subfamily. Interacts (via C-terminus) with ANK2 and ANK3; required for targeting to the basolateral membrane. Post-translationally, N-glycosylated. As to expression, specifically expressed in kidney. Also detected in liver and ovary.

The protein resides in the cell membrane. The protein localises to the basolateral cell membrane. It catalyses the reaction NH4(+)(in) = NH4(+)(out). It carries out the reaction methylamine(out) = methylamine(in). The catalysed reaction is CO2(out) = CO2(in). In terms of biological role, ammonium transporter involved in the maintenance of acid-base homeostasis. Transports ammonium and its related derivative methylammonium across the basolateral plasma membrane of epithelial cells likely contributing to renal transepithelial ammonia transport and ammonia metabolism. May transport either NH4(+) or NH3 ammonia species predominantly mediating an electrogenic NH4(+) transport. May act as a CO2 channel providing for renal acid secretion. In Homo sapiens (Human), this protein is Ammonium transporter Rh type B.